Here is a 298-residue protein sequence, read N- to C-terminus: Glutamyl-Q tRNA(Asp) synthetase (298 aa).

L-glutamate contacts are provided by residues arginine 9–serine 13 and glutamate 45. Positions proline 12–serine 22 match the 'HIGH' region motif. Residues cysteine 101, cysteine 103, tyrosine 115, and cysteine 119 each coordinate Zn(2+). The L-glutamate site is built by tyrosine 172 and arginine 190. Residues lysine 228–glutamine 232 carry the 'KMSKS' region motif. An ATP-binding site is contributed by lysine 231.

Belongs to the class-I aminoacyl-tRNA synthetase family. GluQ subfamily. It depends on Zn(2+) as a cofactor.

Its function is as follows. Catalyzes the tRNA-independent activation of glutamate in presence of ATP and the subsequent transfer of glutamate onto a tRNA(Asp). Glutamate is transferred on the 2-amino-5-(4,5-dihydroxy-2-cyclopenten-1-yl) moiety of the queuosine in the wobble position of the QUC anticodon. The protein is Glutamyl-Q tRNA(Asp) synthetase of Citrobacter koseri (strain ATCC BAA-895 / CDC 4225-83 / SGSC4696).